The chain runs to 1416 residues: Phospholipid-transporting ATPase VD (1416 aa).

Over 1–97 (MTELLQWARH…PRNLFEQFHR (97 aa)) the chain is Cytoplasmic. The chain crosses the membrane as a helical span at residues 98–118 (AANLYFLFLVVLNWVPLVEAF). Topologically, residues 119 to 120 (QK) are exoplasmic loop. The chain crosses the membrane as a helical span at residues 121-141 (EITMLPLVVVLTIIAIKDGLE). Topologically, residues 142–321 (DYRKYKIDKQ…SKLERRANTD (180 aa)) are cytoplasmic. A helical transmembrane segment spans residues 322–342 (VLWCVLLLIVMCLTGALGHGI). Residues 343–365 (WLSRYENMLFFNIPEPDGRVISP) lie on the Exoplasmic loop side of the membrane. The chain crosses the membrane as a helical span at residues 366 to 386 (VLTGFYVFWTMIILLQVLIPI). Over 387–1110 (SLYVSIEIVK…HWCYTRLSNM (724 aa)) the chain is Cytoplasmic. Asp-438 serves as the catalytic 4-aspartylphosphate intermediate. Asp-438, Lys-439, and Thr-440 together coordinate ATP. Asp-438 is a Mg(2+) binding site. Mg(2+) is bound at residue Thr-440. The disordered stretch occupies residues 498–544 (AQGCRTVPSGPLGKPSAQLSGSTSAVGNGEGSGEVPHSRQAAFSSPM). A compositionally biased stretch (polar residues) spans 514 to 523 (AQLSGSTSAV). Residues Glu-729, Phe-771, Lys-795, Arg-838, Thr-918, Gly-919, and Asp-920 each coordinate ATP. Residues 971–990 (PELASSRKNFPQPSDAQGQG) are disordered. Over residues 976–987 (SRKNFPQPSDAQ) the composition is skewed to polar residues. ATP is bound by residues 993-1000 (GLVITGKT), Arg-1027, and Lys-1033. Asp-1053 is a Mg(2+) binding site. ATP-binding residues include Asn-1056 and Asp-1057. Asp-1057 is a Mg(2+) binding site. A helical transmembrane segment spans residues 1111–1131 (ILYFFYKNVAYVNLLFWYQFF). At 1132 to 1142 (CGFSGTSMTDY) the chain is on the exoplasmic loop side. Residues 1143–1163 (WVLIFFNLLFTSVPPIIYGVL) form a helical membrane-spanning segment. Residues 1164 to 1192 (EKDVSAETLLQLPELYRSGQRSEEYLPLT) are Cytoplasmic-facing. Residues 1193–1213 (FWITLLDAFYQSLVCFFVPYF) traverse the membrane as a helical segment. At 1214 to 1221 (TYQGSDID) the chain is on the exoplasmic loop side. The chain crosses the membrane as a helical span at residues 1222–1242 (IFTFGNPLNTAALFIILLHLV). Residues 1243 to 1252 (IESKSLTWIH) lie on the Cytoplasmic side of the membrane. Residues 1253 to 1273 (MLVTVGSILSYFFFALAFGAL) form a helical membrane-spanning segment. Topologically, residues 1274–1289 (CVTCNPPSNPYGIMRK) are exoplasmic loop. The chain crosses the membrane as a helical span at residues 1290–1310 (HMLDPVFYLVCVLTTFVALLP). Topologically, residues 1311–1416 (RFLYRVLQGS…ASKMTGSSAS (106 aa)) are cytoplasmic. The disordered stretch occupies residues 1358–1416 (SKHASQSAAMSGRPTPGSSAVLAMKSATVSTVEQSTRETALDRGCSEPGASKMTGSSAS). 1361–1368 (ASQSAAMS) contributes to the ATP binding site. A compositionally biased stretch (basic and acidic residues) spans 1392–1402 (STRETALDRGC).

It belongs to the cation transport ATPase (P-type) (TC 3.A.3) family. Type IV subfamily. Component of a P4-ATPase flippase complex which consists of a catalytic alpha subunit ATP10A and an accessory beta subunit TMEM30A. The cofactor is Mg(2+). Autophosphorylated at the conserved aspartate of the P-type ATPase signature sequence. In terms of tissue distribution, expressed at low amounts in liver, brain, testes, and kidney (at protein level). Expressed in placenta.

The protein localises to the cell membrane. Its subcellular location is the endoplasmic reticulum membrane. The enzyme catalyses ATP + H2O + phospholipidSide 1 = ADP + phosphate + phospholipidSide 2.. It carries out the reaction a beta-D-glucosyl-(1&lt;-&gt;1')-N-acylsphing-4-enine(out) + ATP + H2O = a beta-D-glucosyl-(1&lt;-&gt;1')-N-acylsphing-4-enine(in) + ADP + phosphate + H(+). Functionally, catalytic component of a P4-ATPase flippase complex, which catalyzes the hydrolysis of ATP coupled to the transport of glucosylceramide (GlcCer) from the outer to the inner leaflet of the plasma membrane. The sequence is that of Phospholipid-transporting ATPase VD (Atp10d) from Mus musculus (Mouse).